The sequence spans 231 residues: DNA mismatch repair protein MutH (231 aa).

Belongs to the MutH family.

It localises to the cytoplasm. Sequence-specific endonuclease that cleaves unmethylated GATC sequences. It is involved in DNA mismatch repair. The protein is DNA mismatch repair protein MutH of Pectobacterium atrosepticum (strain SCRI 1043 / ATCC BAA-672) (Erwinia carotovora subsp. atroseptica).